The sequence spans 213 residues: Protein DMP4 (213 aa).

Helical transmembrane passes span 51–71, 78–98, 142–162, and 180–200; these read LANL…PIFS, LVSK…CFIL, FIDF…VLFD, and VLTA…ATFP.

It belongs to the plant DMP1 protein family. In terms of tissue distribution, expressed in leaves, flowers and siliques, especially in vascular tissues.

It localises to the vacuole membrane. Involved in membrane remodeling. The chain is Protein DMP4 from Arabidopsis thaliana (Mouse-ear cress).